A 310-amino-acid polypeptide reads, in one-letter code: Olfactory receptor 5H14 (310 aa).

Residues 1–28 are Extracellular-facing; it reads MEEENATLLTEFVLTGFLYQPQWKIPLF. Asparagine 5 carries N-linked (GlcNAc...) asparagine glycosylation. A helical transmembrane segment spans residues 29-49; sequence LAFLVIYLITIMGNLGLIAVI. At 50 to 56 the chain is on the cytoplasmic side; it reads WKDPHLH. A helical membrane pass occupies residues 57–77; the sequence is IPMYLLLGNLAFVDALLSSSV. The Extracellular portion of the chain corresponds to 78–98; the sequence is TLKMLINFLAKSKMISLSECK. Residues cysteine 97 and cysteine 179 are joined by a disulfide bond. The chain crosses the membrane as a helical span at residues 99–119; sequence IQLFSFAISVTTECFLLATMA. The Cytoplasmic portion of the chain corresponds to 120–143; that stretch reads YDRYVAICKPLLYPAIMTNGLCIR. Residues 144 to 164 form a helical membrane-spanning segment; that stretch reads LLILSYVGGLLHALIHEGFLF. Residues 165 to 195 lie on the Extracellular side of the membrane; the sequence is RLTFCNSNIIQHFYCDIIPLLKISYTDSSIN. The helical transmembrane segment at 196–216 threads the bilayer; that stretch reads FLMVFIFAGSIQVFTIGTVLI. Residues 217-240 lie on the Cytoplasmic side of the membrane; that stretch reads SYIFVLYTILKKKSVKGMRKAFST. A helical membrane pass occupies residues 241 to 261; sequence CGAHLLSVSLYYGPLAFMYMG. Residues 262–271 lie on the Extracellular side of the membrane; sequence SASPQADDQD. Residues 272–292 form a helical membrane-spanning segment; it reads MMESLFYTVIVPLLNPMIYSL. Topologically, residues 293–310 are cytoplasmic; the sequence is RNKQVIASFTKMFKRNDV.

It belongs to the G-protein coupled receptor 1 family.

The protein localises to the cell membrane. Odorant receptor. This chain is Olfactory receptor 5H14 (OR5H14), found in Homo sapiens (Human).